A 496-amino-acid chain; its full sequence is MARYEFFRQIFIVLSIVSPLVRSFTVITSDSTAPSALIDGPQTGFTMTNDGARTEPDEQDAVYDIMRATGNDWAAAIPDVCRGRWHGIECMPDQDNVYHVVSLSFGALSDDTAFPTCDPQRSYVSESLTRLKHLKALFFYRCLGRAPQRIPAFLGRLGSSLQTLVLRENGFLGPIPDELGNLTNLKVLDLHKNHLNGSIPLSFNRFSGLRSLDLSGNRLTGSIPGFVLPALSVLDLNQNLLTGPVPPTLTSCGSLIKIDLSRNRVTGPIPESINRLNQLVLLDLSYNRLSGPFPSSLQGLNSLQALMLKGNTKFSTTIPENAFKGLKNLMILVLSNTNIQGSIPKSLTRLNSLRVLHLEGNNLTGEIPLEFRDVKHLSELRLNDNSLTGPVPFERDTVWRMRRKLRLYNNAGLCVNRDSDLDDAFGSKSGSTVRLCDAETSRPAPSGTVQHLSREEDGALPDGATDVSSTSKSLGFSYLSAFFLVFPNFIFMLISS.

An N-terminal signal peptide occupies residues 1–23; sequence MARYEFFRQIFIVLSIVSPLVRS. At 24–473 the chain is on the extracellular side; sequence FTVITSDSTA…ATDVSSTSKS (450 aa). 10 LRR repeats span residues 158 to 182, 183 to 208, 210 to 228, 229 to 252, 254 to 276, 277 to 300, 302 to 325, 326 to 350, 351 to 373, and 375 to 401; these read GSSL…LGNL, TNLK…RFSG, RSLD…GFVL, PALS…LTSC, SLIK…INRL, NQLV…LQGL, SLQA…AFKG, LKNL…LTRL, NSLR…EFRD, and KHLS…VWRM. Asparagine 181 and asparagine 196 each carry an N-linked (GlcNAc...) asparagine glycan. The N-linked (GlcNAc...) asparagine glycan is linked to asparagine 362. The interval 438-464 is disordered; it reads AETSRPAPSGTVQHLSREEDGALPDGA. Residues 474-494 traverse the membrane as a helical segment; sequence LGFSYLSAFFLVFPNFIFMLI. The Cytoplasmic portion of the chain corresponds to 495–496; that stretch reads SS.

Belongs to the RLP family. Forms heterodimer with ERECTA or ERL1 through their extracellular domains. Not able to form homodimer. Interacts with EPF2 but not with EPF1. Interacts with SERK1, SERK2, SERK3/BAK1 and SERK4. Interacts with EPFL9/STOMAGEN. In terms of tissue distribution, in epidermal cells of developing shoots and leaves, but not in roots. Expressed in the stomatal cell lineage in the developing epidermis. Accumulates strongly in meristemoid mother cells (MMC) and meristemoids, somewhat less in meristemoid sister cells (stomatal-lineage ground cells, SLGC), and is barely detected in pavement cells.

It localises to the cell membrane. Its function is as follows. Promotes cell fate progression in stomatal development. In leaves, needed to correctly orient spacing divisions, to limit the number of asymmetric divisions in neighbor cells, and to promote the asymmetric (amplifying) divisions of meristemoids. In stems, promotes the conversion of meristemoids into guard mother cells (GMC). Positively regulates CAPRICE (CPC) expression in differentiating stomaless-forming cell files. Forms constitutive complexes with ERECTA and ERL1 involved in the recognition of the stomatal regulatory peptides EPF1, EPF2 and EPFL9/STOMAGEN. Modulates the activity of the ligand-receptor pairs EPF2-ERECTA and EPF1-ERL1 in stomatal development. Functions in a combinatorial specific manner with the ERECTA-family (ERf) receptor kinases in the regulation of the immune response. In Arabidopsis thaliana (Mouse-ear cress), this protein is Protein TOO MANY MOUTHS.